A 37-amino-acid chain; its full sequence is M-oxotoxin-Ot2d (37 aa).

In terms of tissue distribution, expressed by the venom gland.

It localises to the secreted. Disrupts biological membranes, particularly those rich in phosphocholine. Has antimicrobial activity against Gram-negative bacterium E.coli, Gram-positive bacteria B.subtilis and S.aureus, and hemolytic activity against sheep, pig and guinea pig red blood cells. Has insecticidal activity against S.frugiperda ovarian cells by opening non-selective ion channels. Enhances the insecticidal activity of spider venom neurotoxic peptides. The sequence is that of M-oxotoxin-Ot2d from Oxyopes takobius (Lynx spider).